A 385-amino-acid chain; its full sequence is 8-amino-7-oxononanoate synthase (385 aa).

Arg21 provides a ligand contact to substrate. 108 to 109 (GF) contacts pyridoxal 5'-phosphate. His133 provides a ligand contact to substrate. Pyridoxal 5'-phosphate is bound by residues Ser179, His207, and Thr233. Lys236 is modified (N6-(pyridoxal phosphate)lysine). Thr352 contributes to the substrate binding site.

Belongs to the class-II pyridoxal-phosphate-dependent aminotransferase family. BioF subfamily. In terms of assembly, homodimer. The cofactor is pyridoxal 5'-phosphate.

It catalyses the reaction 6-carboxyhexanoyl-[ACP] + L-alanine + H(+) = (8S)-8-amino-7-oxononanoate + holo-[ACP] + CO2. Its pathway is cofactor biosynthesis; biotin biosynthesis. Catalyzes the decarboxylative condensation of pimeloyl-[acyl-carrier protein] and L-alanine to produce 8-amino-7-oxononanoate (AON), [acyl-carrier protein], and carbon dioxide. The protein is 8-amino-7-oxononanoate synthase of Salmonella newport (strain SL254).